We begin with the raw amino-acid sequence, 183 residues long: Adenine phosphoribosyltransferase (183 aa).

This sequence belongs to the purine/pyrimidine phosphoribosyltransferase family. In terms of assembly, homodimer.

It localises to the cytoplasm. It catalyses the reaction AMP + diphosphate = 5-phospho-alpha-D-ribose 1-diphosphate + adenine. The protein operates within purine metabolism; AMP biosynthesis via salvage pathway; AMP from adenine: step 1/1. In terms of biological role, catalyzes a salvage reaction resulting in the formation of AMP, that is energically less costly than de novo synthesis. The protein is Adenine phosphoribosyltransferase of Shigella flexneri serotype 5b (strain 8401).